A 278-amino-acid polypeptide reads, in one-letter code: 4-diphosphocytidyl-2-C-methyl-D-erythritol kinase (278 aa).

K9 is a catalytic residue. ATP is bound at residue 93 to 103 (PISAGLAGGSS). Residue D135 is part of the active site.

It belongs to the GHMP kinase family. IspE subfamily.

The enzyme catalyses 4-CDP-2-C-methyl-D-erythritol + ATP = 4-CDP-2-C-methyl-D-erythritol 2-phosphate + ADP + H(+). It participates in isoprenoid biosynthesis; isopentenyl diphosphate biosynthesis via DXP pathway; isopentenyl diphosphate from 1-deoxy-D-xylulose 5-phosphate: step 3/6. Functionally, catalyzes the phosphorylation of the position 2 hydroxy group of 4-diphosphocytidyl-2C-methyl-D-erythritol. The protein is 4-diphosphocytidyl-2-C-methyl-D-erythritol kinase of Finegoldia magna (strain ATCC 29328 / DSM 20472 / WAL 2508) (Peptostreptococcus magnus).